The following is a 135-amino-acid chain: C-type lectin LmsL (135 aa).

4 cysteine pairs are disulfide-bonded: Cys-3/Cys-14, Cys-31/Cys-131, Cys-38/Cys-133, and Cys-106/Cys-123. The C-type lectin domain occupies 10–132 (MNGLCYKIFD…CESKNAFLCQ (123 aa)). The Ca(2+) site is built by Gln-96, Asp-98, Glu-104, Asn-119, and Asp-120. The Galactose-binding signature appears at 96–98 (QPD).

Belongs to the true venom lectin family. In terms of assembly, homodimer; disulfide-linked. As to expression, expressed by the venom gland.

The protein resides in the secreted. Galactose-binding protein which recognizes specific carbohydrate structures and agglutinates a variety of animal cells by binding to cell-surface glycoproteins and glycolipids. Is a calcium-dependent lectin. Shows high hemagglutinating activity, that is inhibited by lactose, galactose and inositol. The chain is C-type lectin LmsL from Lachesis stenophrys (Central American bushmaster).